Reading from the N-terminus, the 59-residue chain is Large ribosomal subunit protein uL30 (59 aa).

This sequence belongs to the universal ribosomal protein uL30 family. Part of the 50S ribosomal subunit.

The chain is Large ribosomal subunit protein uL30 from Enterobacter sp. (strain 638).